A 348-amino-acid polypeptide reads, in one-letter code: Galactose-1-phosphate uridylyltransferase (348 aa).

28–31 (RAKR) contacts UDP-alpha-D-glucose. Zn(2+) contacts are provided by Cys-52 and Cys-55. UDP-alpha-D-glucose is bound by residues Val-61 and 77–78 (ND). His-115 lines the Zn(2+) pocket. UDP-alpha-D-glucose is bound by residues Asn-153 and 159–161 (GCS). His-164 contacts Zn(2+). His-166 acts as the Tele-UMP-histidine intermediate in catalysis. Position 168 (Gln-168) interacts with UDP-alpha-D-glucose. Fe cation contacts are provided by Glu-182, His-281, His-296, and His-298. Residues 311-312 (KF), 316-317 (YE), and Gln-323 each bind UDP-alpha-D-glucose.

Belongs to the galactose-1-phosphate uridylyltransferase type 1 family. Zn(2+) serves as cofactor.

It catalyses the reaction alpha-D-galactose 1-phosphate + UDP-alpha-D-glucose = alpha-D-glucose 1-phosphate + UDP-alpha-D-galactose. It participates in carbohydrate metabolism; galactose metabolism. The polypeptide is Galactose-1-phosphate uridylyltransferase (galT) (Salmonella typhimurium (strain LT2 / SGSC1412 / ATCC 700720)).